Here is a 391-residue protein sequence, read N- to C-terminus: O-methyltransferase ATR12 (391 aa).

Residues 233 to 234 (GG), Asp-259, and 279 to 280 (DF) each bind S-adenosyl-L-methionine. His-299 (proton acceptor) is an active-site residue.

It belongs to the class I-like SAM-binding methyltransferase superfamily. Cation-independent O-methyltransferase family. COMT subfamily.

It participates in mycotoxin biosynthesis. Functionally, O-methyltransferase; part of the core atranone cluster (CAC) which products are predicted to catalyze most or all steps of mycotoxin atranone synthesis, starting from geranylgeranyl pyrophosphate (GGPP). The initial cyclization of GGPP to dolabellane is probably performed by the terpene cyclase ATR13. The Baeyer-Villiger oxidation near the end of the atranone synthesis, which converts atranones D and E to atranones F and G is predicted to be catalyzed by the monooxygenase ATR8. Of the CAC's other predicted gene products, the reducing PKS ATR6 might synthesize a polyketide chain. This polyketide is probably transferred onto the atranone backbone by the polyketide transferase ATR5. Other predicted CAC products include 4 oxygenases (ATR2, ATR3, ATR4, and ATR14), 3 short-chain reductases (ATR7, ATR9, and ATR10), and a methyltransferase (ATR12). These may all be involved in the various steps of atranone biosynthesis, although their specific roles must await experimental determination. In Stachybotrys chlorohalonatus (strain IBT 40285), this protein is O-methyltransferase ATR12.